A 359-amino-acid polypeptide reads, in one-letter code: Peptide chain release factor 1 (359 aa).

At Gln-235 the chain carries N5-methylglutamine.

Belongs to the prokaryotic/mitochondrial release factor family. Methylated by PrmC. Methylation increases the termination efficiency of RF1.

The protein resides in the cytoplasm. Functionally, peptide chain release factor 1 directs the termination of translation in response to the peptide chain termination codons UAG and UAA. This chain is Peptide chain release factor 1, found in Chelativorans sp. (strain BNC1).